The following is a 143-amino-acid chain: Large ribosomal subunit protein uL15 (143 aa).

The disordered stretch occupies residues 1–52 (MKLNTLAPAAGSKSAPKRLGRGIGSGLGKTSGKGHKGQKARSGGYHKVGFEG). Residues 21 to 31 (RGIGSGLGKTS) show a composition bias toward gly residues.

It belongs to the universal ribosomal protein uL15 family. In terms of assembly, part of the 50S ribosomal subunit.

Its function is as follows. Binds to the 23S rRNA. This Francisella tularensis subsp. novicida (strain U112) protein is Large ribosomal subunit protein uL15.